Reading from the N-terminus, the 383-residue chain is Cathepsin D (383 aa).

Residues methionine 1–alanine 18 form the signal peptide. Residues leucine 19–asparagine 48 constitute a propeptide that is removed on maturation. Residues tyrosine 63 to alanine 378 enclose the Peptidase A1 domain. Aspartate 81 is an active-site residue. Cysteine 94 and cysteine 101 form a disulfide bridge. Residues asparagine 118 and asparagine 238 are each glycosylated (N-linked (GlcNAc...) asparagine). Cysteine 259 and cysteine 263 are disulfide-bonded. Residue aspartate 268 is part of the active site. A disulfide bridge connects residues cysteine 302 and cysteine 339. An N-linked (GlcNAc...) asparagine glycan is attached at asparagine 310.

It belongs to the peptidase A1 family. In terms of assembly, monomer. Post-translationally, N-glycosylated on 2 out of the 3 potential sites. Glycans contain sulfated Mannose.

The protein localises to the lysosome. The protein resides in the secreted. The catalysed reaction is Specificity similar to, but narrower than, that of pepsin A. Does not cleave the 4-Gln-|-His-5 bond in B chain of insulin.. Functionally, protease that may act during cell growth and/or development. In Dictyostelium discoideum (Social amoeba), this protein is Cathepsin D (ctsD).